The primary structure comprises 252 residues: Large ribosomal subunit protein uL4 (252 aa).

The protein belongs to the universal ribosomal protein uL4 family. Part of the 50S ribosomal subunit.

Its function is as follows. One of the primary rRNA binding proteins, this protein initially binds near the 5'-end of the 23S rRNA. It is important during the early stages of 50S assembly. It makes multiple contacts with different domains of the 23S rRNA in the assembled 50S subunit and ribosome. In terms of biological role, forms part of the polypeptide exit tunnel. The sequence is that of Large ribosomal subunit protein uL4 from Methanococcus maripaludis (strain C7 / ATCC BAA-1331).